Reading from the N-terminus, the 256-residue chain is Sugar fermentation stimulation protein homolog (256 aa).

Belongs to the SfsA family.

The polypeptide is Sugar fermentation stimulation protein homolog (Prochlorococcus marinus (strain MIT 9211)).